Here is a 20-residue protein sequence, read N- to C-terminus: Cytotoxin drCT-1 (20 aa).

The protein belongs to the three-finger toxin family. Short-chain subfamily. Type IA cytotoxin sub-subfamily. Monomer in solution; Homodimer and oligomer in the presence of negatively charged lipids forming a pore with a size ranging between 20 and 30 Angstroms. Expressed by the venom gland.

Its subcellular location is the secreted. It localises to the target cell membrane. Functionally, this three-finger cytotoxin has antiproliferative, cytotoxic and apoptotic activities. Both in vivo and in vitro experimental results suggests that this protein possess anticancer potential. Also shows neurotoxicity, cardiotoxicity and myotoxicity. The sequence is that of Cytotoxin drCT-1 from Daboia russelii (Russel's viper).